The following is a 603-amino-acid chain: Threonine--tRNA ligase (603 aa).

The tract at residues 197-499 is catalytic; that stretch reads DHRKLGKELG…LIEEYAGDFP (303 aa). Zn(2+) contacts are provided by cysteine 296, histidine 347, and histidine 476.

The protein belongs to the class-II aminoacyl-tRNA synthetase family. Homodimer. It depends on Zn(2+) as a cofactor.

The protein resides in the cytoplasm. The enzyme catalyses tRNA(Thr) + L-threonine + ATP = L-threonyl-tRNA(Thr) + AMP + diphosphate + H(+). Functionally, catalyzes the attachment of threonine to tRNA(Thr) in a two-step reaction: L-threonine is first activated by ATP to form Thr-AMP and then transferred to the acceptor end of tRNA(Thr). Also edits incorrectly charged L-seryl-tRNA(Thr). In Synechocystis sp. (strain ATCC 27184 / PCC 6803 / Kazusa), this protein is Threonine--tRNA ligase.